We begin with the raw amino-acid sequence, 319 residues long: MKTIAVLTSGGDAPGMNAAIRAVVRTAIEKGINVKGIQRGYSGLINGEIFDMNRHSVSDIIQRGGTILRTARCPEFLKEEVRQKAANVLRVFGIDGLVVIGGNGSFMGAQKLSKLGVKTVGLPGTIDNDLPYTDYTIGFDTTLNTVLDAINKLRDTSTSHERVSIIEVMGRDCGDIALFSGIAGGAESVIIPEIGYDFNELCKNILEGKLRGKMHNLIILAEGVGGAAELAKKVEEVTGIETRSTILGHIQRGGSPSAFDRMLASRMGVKAVEVLMEGKTSRVIGIKEGKIMDQDIDEALAVPRSFNKELYDIANMLSK.

ATP is bound at residue Gly11. 21–25 (RAVVR) lines the ADP pocket. ATP contacts are provided by residues 72-73 (RC) and 102-105 (GNGS). Residue Asn103 coordinates Mg(2+). 125-127 (TID) provides a ligand contact to substrate. Asp127 (proton acceptor) is an active-site residue. ADP is bound at residue Arg154. Substrate is bound by residues Arg162 and 169 to 171 (MGR). ADP contacts are provided by residues 185-187 (GAE), Arg211, and 213-215 (KMH). Substrate contacts are provided by residues Glu222, Arg243, and 249–252 (HIQR).

It belongs to the phosphofructokinase type A (PFKA) family. ATP-dependent PFK group I subfamily. Prokaryotic clade 'B1' sub-subfamily. As to quaternary structure, homotetramer. Requires Mg(2+) as cofactor.

It is found in the cytoplasm. The enzyme catalyses beta-D-fructose 6-phosphate + ATP = beta-D-fructose 1,6-bisphosphate + ADP + H(+). It participates in carbohydrate degradation; glycolysis; D-glyceraldehyde 3-phosphate and glycerone phosphate from D-glucose: step 3/4. Allosterically activated by ADP and other diphosphonucleosides, and allosterically inhibited by phosphoenolpyruvate. Functionally, catalyzes the phosphorylation of D-fructose 6-phosphate to fructose 1,6-bisphosphate by ATP, the first committing step of glycolysis. This Clostridium acetobutylicum (strain ATCC 824 / DSM 792 / JCM 1419 / IAM 19013 / LMG 5710 / NBRC 13948 / NRRL B-527 / VKM B-1787 / 2291 / W) protein is ATP-dependent 6-phosphofructokinase.